A 212-amino-acid chain; its full sequence is Thymidylate kinase (212 aa).

7–14 contributes to the ATP binding site; the sequence is GGEGCGKT.

The protein belongs to the thymidylate kinase family.

It carries out the reaction dTMP + ATP = dTDP + ADP. Phosphorylation of dTMP to form dTDP in both de novo and salvage pathways of dTTP synthesis. This chain is Thymidylate kinase, found in Gloeobacter violaceus (strain ATCC 29082 / PCC 7421).